The following is a 168-amino-acid chain: tRNA (cytidine(56)-2'-O)-methyltransferase (168 aa).

S-adenosyl-L-methionine contacts are provided by residues L79 and 104–108 (GAEKV).

The protein belongs to the aTrm56 family. As to quaternary structure, homodimer.

The protein resides in the cytoplasm. It carries out the reaction cytidine(56) in tRNA + S-adenosyl-L-methionine = 2'-O-methylcytidine(56) in tRNA + S-adenosyl-L-homocysteine + H(+). In terms of biological role, specifically catalyzes the AdoMet-dependent 2'-O-ribose methylation of cytidine at position 56 in tRNAs. The polypeptide is tRNA (cytidine(56)-2'-O)-methyltransferase (Archaeoglobus fulgidus (strain ATCC 49558 / DSM 4304 / JCM 9628 / NBRC 100126 / VC-16)).